The following is a 459-amino-acid chain: Bifunctional protein GlmU (459 aa).

A pyrophosphorylase region spans residues 1–229 (MLTQEIIIVI…YEEILGINNK (229 aa)). UDP-N-acetyl-alpha-D-glucosamine is bound by residues 11 to 14 (LAAG), lysine 25, glutamine 76, 81 to 82 (GT), 103 to 105 (YGD), glycine 140, glutamate 154, and asparagine 227. Position 105 (aspartate 105) interacts with Mg(2+). Asparagine 227 is a Mg(2+) binding site. The interval 230–250 (LQLSNLEKIFQKKQINKLLIN) is linker. The tract at residues 251-459 (GVTIKDPSHF…MRSKKIIKKN (209 aa)) is N-acetyltransferase. 2 residues coordinate UDP-N-acetyl-alpha-D-glucosamine: arginine 333 and lysine 351. Residue histidine 363 is the Proton acceptor of the active site. UDP-N-acetyl-alpha-D-glucosamine contacts are provided by tyrosine 366 and asparagine 377. Residues alanine 380, 386–387 (NY), serine 405, and alanine 423 each bind acetyl-CoA.

It in the N-terminal section; belongs to the N-acetylglucosamine-1-phosphate uridyltransferase family. This sequence in the C-terminal section; belongs to the transferase hexapeptide repeat family. In terms of assembly, homotrimer. Mg(2+) is required as a cofactor.

It is found in the cytoplasm. The catalysed reaction is alpha-D-glucosamine 1-phosphate + acetyl-CoA = N-acetyl-alpha-D-glucosamine 1-phosphate + CoA + H(+). It catalyses the reaction N-acetyl-alpha-D-glucosamine 1-phosphate + UTP + H(+) = UDP-N-acetyl-alpha-D-glucosamine + diphosphate. The protein operates within nucleotide-sugar biosynthesis; UDP-N-acetyl-alpha-D-glucosamine biosynthesis; N-acetyl-alpha-D-glucosamine 1-phosphate from alpha-D-glucosamine 6-phosphate (route II): step 2/2. It functions in the pathway nucleotide-sugar biosynthesis; UDP-N-acetyl-alpha-D-glucosamine biosynthesis; UDP-N-acetyl-alpha-D-glucosamine from N-acetyl-alpha-D-glucosamine 1-phosphate: step 1/1. Its pathway is bacterial outer membrane biogenesis; LPS lipid A biosynthesis. Its function is as follows. Catalyzes the last two sequential reactions in the de novo biosynthetic pathway for UDP-N-acetylglucosamine (UDP-GlcNAc). The C-terminal domain catalyzes the transfer of acetyl group from acetyl coenzyme A to glucosamine-1-phosphate (GlcN-1-P) to produce N-acetylglucosamine-1-phosphate (GlcNAc-1-P), which is converted into UDP-GlcNAc by the transfer of uridine 5-monophosphate (from uridine 5-triphosphate), a reaction catalyzed by the N-terminal domain. This Buchnera aphidicola subsp. Acyrthosiphon pisum (strain 5A) protein is Bifunctional protein GlmU.